The chain runs to 218 residues: Oxidative stress regulator AosR (218 aa).

Residues 5-9 (CGRRC) carry the CXXXC motif. Residues Cys-5 and Cys-9 are joined by a disulfide bond.

The protein belongs to the AosR family. In terms of assembly, homodimer. Under oxidative stress, interacts with the extracytoplasmic-function (ECF) RNA polymerase sigma factor SigH.

Activity is modulated by the formation of a disulfide bound within the N-terminal Cys-X-X-X-Cys (CXXXC) motif. This intramolecular disulfide bond is formed in response to oxidative stress, and results in oxidative stress-dependent interaction with the sigma factor SigH. Transcription factor crucial for intra-mycobacterial redox homeostasis and protection against host-derived oxidative and nitrosative radicals. In response to oxidative stress, interacts with the ECF sigma factor SigH and, in conjunction with SigH, binds to an auxiliary promoter upstream of mec-cysO-cysM, leading to the transcriptional activation of these genes encoding a non-canonical actinomycete-specific cysteine biosynthesis pathway. Increased transcription of mec-cysO-cysM results in enhanced production of L-cysteine and cysteine-derived antioxidant molecules. Increased production of cysteine protects mycobacteria cells from host phagocyte-derived oxidative and nitrosative stress, thus facilitating the mycobacterial growth in the host. The chain is Oxidative stress regulator AosR from Mycobacterium bovis (strain ATCC BAA-935 / AF2122/97).